The sequence spans 123 residues: MPTVNQLIRKPRKPLVKRNKVPAMQACPQKRGVCTRVYTTTPKKPNSALRKVARVRLTNQFEVTSYIPGEGHNLQEHSVVLIRGGRVKDLPGVRYHIIRGVLDTQGVKDRRQRRSKYGAKRPK.

D89 carries the 3-methylthioaspartic acid modification. A disordered region spans residues 104 to 123; sequence TQGVKDRRQRRSKYGAKRPK. Basic residues predominate over residues 110-123; it reads RRQRRSKYGAKRPK.

Belongs to the universal ribosomal protein uS12 family. As to quaternary structure, part of the 30S ribosomal subunit. Contacts proteins S8 and S17. May interact with IF1 in the 30S initiation complex.

In terms of biological role, with S4 and S5 plays an important role in translational accuracy. Its function is as follows. Interacts with and stabilizes bases of the 16S rRNA that are involved in tRNA selection in the A site and with the mRNA backbone. Located at the interface of the 30S and 50S subunits, it traverses the body of the 30S subunit contacting proteins on the other side and probably holding the rRNA structure together. The combined cluster of proteins S8, S12 and S17 appears to hold together the shoulder and platform of the 30S subunit. This is Small ribosomal subunit protein uS12 from Parvibaculum lavamentivorans (strain DS-1 / DSM 13023 / NCIMB 13966).